Reading from the N-terminus, the 191-residue chain is DNA-directed RNA polymerase subunit Rpo3 (191 aa).

It belongs to the archaeal Rpo3/eukaryotic RPB3 RNA polymerase subunit family. In terms of assembly, part of the RNA polymerase complex. Interacts with Rpo12. Forms an Rpo3-Rpo10-Rpo11-Rpo12 complex upon coexpression.

It localises to the cytoplasm. It catalyses the reaction RNA(n) + a ribonucleoside 5'-triphosphate = RNA(n+1) + diphosphate. In terms of biological role, DNA-dependent RNA polymerase (RNAP) catalyzes the transcription of DNA into RNA using the four ribonucleoside triphosphates as substrates. The protein is DNA-directed RNA polymerase subunit Rpo3 of Methanocaldococcus jannaschii (strain ATCC 43067 / DSM 2661 / JAL-1 / JCM 10045 / NBRC 100440) (Methanococcus jannaschii).